The chain runs to 512 residues: Alpha-amylase (512 aa).

The N-terminal stretch at 1-29 (MKQQKRLYARLLTLLFALIFLLPHSAAAA) is a signal peptide. The Ca(2+) site is built by asparagine 133, aspartate 190, alanine 210, aspartate 212, aspartate 223, aspartate 229, aspartate 231, and aspartate 233. Aspartate 190 lines the Na(+) pocket. Residues aspartate 212, aspartate 223, and aspartate 229 each contribute to the Na(+) site. Residue aspartate 260 is the Nucleophile of the active site. Residue histidine 264 participates in Ca(2+) binding. The active-site Proton donor is the glutamate 290. Positions 329, 331, 435, 436, and 459 each coordinate Ca(2+).

This sequence belongs to the glycosyl hydrolase 13 family. Monomer. Ca(2+) serves as cofactor. The cofactor is Na(+).

It is found in the secreted. The catalysed reaction is Endohydrolysis of (1-&gt;4)-alpha-D-glucosidic linkages in polysaccharides containing three or more (1-&gt;4)-alpha-linked D-glucose units.. The polypeptide is Alpha-amylase (amyS) (Bacillus licheniformis).